Here is a 721-residue protein sequence, read N- to C-terminus: Quinolinate synthase, chloroplastic (721 aa).

A chloroplast-targeting transit peptide spans M1–T67. The active-site Cysteine persulfide intermediate is C133. Residues H283 and S309 each contribute to the iminosuccinate site. Position 363 (C363) interacts with [4Fe-4S] cluster. Iminosuccinate contacts are provided by residues Y392 to N394 and S414. C487 serves as a coordination point for [4Fe-4S] cluster. Iminosuccinate is bound by residues H513–E515 and T538. [4Fe-4S] cluster is bound at residue C643.

Belongs to the quinolinate synthase family. Type 1 subfamily. As to quaternary structure, homodimer. It depends on [4Fe-4S] cluster as a cofactor.

The protein localises to the plastid. It is found in the chloroplast. It carries out the reaction iminosuccinate + dihydroxyacetone phosphate = quinolinate + phosphate + 2 H2O + H(+). It participates in alkaloid biosynthesis; nicotine biosynthesis. Its pathway is cofactor biosynthesis; NAD(+) biosynthesis; quinolinate from iminoaspartate: step 1/1. Its function is as follows. Involved in the biosynthesis of pyridine alkaloid natural products, leading mainly to the production of anabasine, anatabine, nicotine and nornicotine, effective deterrents against herbivores with antiparasitic and pesticide properties (neurotoxins); nornicotine serves as the precursor in the synthesis of the carcinogen compound N'-nitrosonornicotine (NNN). Catalyzes the condensation of iminoaspartate with dihydroxyacetone phosphate to form quinolinate. The protein is Quinolinate synthase, chloroplastic of Nicotiana tabacum (Common tobacco).